We begin with the raw amino-acid sequence, 256 residues long: NAD-dependent protein deacylase 4 (256 aa).

Positions Met1 to Gly250 constitute a Deacetylase sirtuin-type domain. An NAD(+)-binding site is contributed by Gly19–Trp39. Residues Tyr64 and Arg67 each coordinate substrate. An NAD(+)-binding site is contributed by Gln98–Asp101. His116 functions as the Proton acceptor in the catalytic mechanism. Zn(2+)-binding residues include Cys124, Cys127, Cys152, and Cys155. Residues Gly192–Ser194, Asn218–Val220, and Ala236 each bind NAD(+).

The protein belongs to the sirtuin family. Class III subfamily. Requires Zn(2+) as cofactor.

The protein localises to the cytoplasm. The enzyme catalyses N(6)-acetyl-L-lysyl-[protein] + NAD(+) + H2O = 2''-O-acetyl-ADP-D-ribose + nicotinamide + L-lysyl-[protein]. It carries out the reaction N(6)-succinyl-L-lysyl-[protein] + NAD(+) + H2O = 2''-O-succinyl-ADP-D-ribose + nicotinamide + L-lysyl-[protein]. NAD-dependent lysine deacetylase and desuccinylase that specifically removes acetyl and succinyl groups on target proteins. Modulates the activities of several proteins which are inactive in their acylated form. The polypeptide is NAD-dependent protein deacylase 4 (Pseudomonas syringae pv. tomato (strain ATCC BAA-871 / DC3000)).